The primary structure comprises 757 residues: Probable tRNA (uracil-O(2)-)-methyltransferase (757 aa).

Disordered stretches follow at residues Glu55–Gln93 and Gln108–Pro138. A compositionally biased stretch (gly residues) spans Pro72–Gly84. Ser78 bears the Phosphoserine mark. Residues Asp123–Asp136 show a composition bias toward basic and acidic residues. Position 533 is a phosphoserine (Ser533). Residues Ala713–Ala743 form a C3H1-type zinc finger.

Belongs to the TRM44 family.

The protein localises to the cytoplasm. It carries out the reaction uridine(44) in tRNA(Ser) + S-adenosyl-L-methionine = 2'-O-methyluridine(44) in tRNA(Ser) + S-adenosyl-L-homocysteine + H(+). Its function is as follows. Probable adenosyl-L-methionine (AdoMet)-dependent tRNA (uracil-O(2)-)-methyltransferase. In Homo sapiens (Human), this protein is Probable tRNA (uracil-O(2)-)-methyltransferase (TRMT44).